The following is a 319-amino-acid chain: Ribonuclease Z (319 aa).

Residues histidine 62, histidine 64, aspartate 66, histidine 67, histidine 139, aspartate 210, and histidine 268 each contribute to the Zn(2+) site. Catalysis depends on aspartate 66, which acts as the Proton acceptor.

It belongs to the RNase Z family. As to quaternary structure, homodimer. Requires Zn(2+) as cofactor.

The enzyme catalyses Endonucleolytic cleavage of RNA, removing extra 3' nucleotides from tRNA precursor, generating 3' termini of tRNAs. A 3'-hydroxy group is left at the tRNA terminus and a 5'-phosphoryl group is left at the trailer molecule.. In terms of biological role, zinc phosphodiesterase, which displays some tRNA 3'-processing endonuclease activity. Probably involved in tRNA maturation, by removing a 3'-trailer from precursor tRNA. The chain is Ribonuclease Z from Nostoc punctiforme (strain ATCC 29133 / PCC 73102).